A 39-amino-acid chain; its full sequence is Cytochrome b559 subunit beta (39 aa).

A helical membrane pass occupies residues 14–30; sequence WLAIHGLAVPTVFFLGS. His18 contacts heme.

In terms of assembly, heterodimer of an alpha subunit and a beta subunit. PSII is composed of 1 copy each of membrane proteins PsbA, PsbB, PsbC, PsbD, PsbE, PsbF, PsbH, PsbI, PsbJ, PsbK, PsbL, PsbM, PsbT, PsbX, PsbY, PsbZ, Psb30/Ycf12, at least 3 peripheral proteins of the oxygen-evolving complex and a large number of cofactors. It forms dimeric complexes. Requires heme b as cofactor. The N-terminus is blocked.

It is found in the plastid. Its subcellular location is the chloroplast thylakoid membrane. Functionally, this b-type cytochrome is tightly associated with the reaction center of photosystem II (PSII). PSII is a light-driven water:plastoquinone oxidoreductase that uses light energy to abstract electrons from H(2)O, generating O(2) and a proton gradient subsequently used for ATP formation. It consists of a core antenna complex that captures photons, and an electron transfer chain that converts photonic excitation into a charge separation. The protein is Cytochrome b559 subunit beta of Spinacia oleracea (Spinach).